We begin with the raw amino-acid sequence, 240 residues long: Nuclear receptor-interacting protein 3 (240 aa).

The protein is Nuclear receptor-interacting protein 3 (NRIP3) of Pongo abelii (Sumatran orangutan).